Reading from the N-terminus, the 563-residue chain is Adenine deaminase (563 aa).

It belongs to the metallo-dependent hydrolases superfamily. Adenine deaminase family. The cofactor is Mn(2+).

The catalysed reaction is adenine + H2O + H(+) = hypoxanthine + NH4(+). The protein is Adenine deaminase of Lactiplantibacillus plantarum (strain ATCC BAA-793 / NCIMB 8826 / WCFS1) (Lactobacillus plantarum).